The sequence spans 134 residues: Small ribosomal subunit protein uS11 (134 aa).

The segment at 114 to 134 (TPVPHNGTRPPRKWFKRQEKR) is disordered. The segment covering 123–134 (PPRKWFKRQEKR) has biased composition (basic residues).

The protein belongs to the universal ribosomal protein uS11 family. Part of the 30S ribosomal subunit. Interacts with proteins S7 and S18. Binds to IF-3.

Its function is as follows. Located on the platform of the 30S subunit, it bridges several disparate RNA helices of the 16S rRNA. Forms part of the Shine-Dalgarno cleft in the 70S ribosome. This is Small ribosomal subunit protein uS11 from Mesomycoplasma hyopneumoniae (strain J / ATCC 25934 / NCTC 10110) (Mycoplasma hyopneumoniae).